The primary structure comprises 508 residues: CUGBP Elav-like family member 2 (508 aa).

2 necessary for RNA-binding, TNNT2 exon 5 and NMDA R1 exon 21 inclusion regions span residues 1–283 (MRCP…LQNL) and 357–508 (LAGM…SKPY). 3 consecutive RRM domains span residues 40–123 (IKMF…PADS), 132–212 (RKLF…FADT), and 423–501 (ANLF…LKRS).

The protein belongs to the CELF/BRUNOL family. Interacts with A1CF. Expressed in tongue, spleen and brain (at protein level). Expressed in liver, thigh, stomach, lung and heart to very low levels (at protein level). Expressed in heart, brain, lung and muscle.

It localises to the nucleus. Its subcellular location is the cytoplasm. In terms of biological role, RNA-binding protein implicated in the regulation of several post-transcriptional events. Involved in pre-mRNA alternative splicing, mRNA translation and stability. Mediates exon inclusion and/or exclusion in pre-mRNA that are subject to tissue-specific and developmentally regulated alternative splicing. Specifically activates exon 5 inclusion of TNNT2 in embryonic, but not adult, skeletal muscle. Activates TNNT2 exon 5 inclusion by antagonizing the repressive effect of PTB. Acts both as an activator and as a repressor of a pair of coregulated exons: promotes inclusion of the smooth muscle (SM) exon but exclusion of the non-muscle (NM) exon in actinin pre-mRNAs. Promotes inclusion of exonS 21 and exclusion of exon 5 of the NMDA receptor R1 pre-mRNA. Involved in the apoB RNA editing activity. Increases COX2 mRNA stability and inhibits COX2 mRNA translation in epithelial cells after radiation injury. Modulates the cellular apoptosis program by regulating COX2-mediated prostaglandin E2 (PGE2) expression. Binds to (CUG)n triplet repeats in the 3'-UTR of transcripts such as DMPK. Binds to the muscle-specific splicing enhancer (MSE) intronic sites flanking the TNNT2 alternative exon 5. Binds preferentially to UG-rich sequences, in particular UG repeat and UGUU motifs. Binds to apoB mRNA, specifically to AU-rich sequences located immediately upstream of the edited cytidine. Binds AU-rich sequences in the 3'-UTR of COX2 mRNA. Binds to an intronic RNA element responsible for the silencing of exon 21 splicing. Binds to (CUG)n repeats. May be a specific regulator of miRNA biogenesis. Binds to primary microRNA pri-MIR140 and, with CELF1, negatively regulates the processing to mature miRNA. The polypeptide is CUGBP Elav-like family member 2 (Celf2) (Mus musculus (Mouse)).